We begin with the raw amino-acid sequence, 490 residues long: Selenium-binding protein 1 (490 aa).

At A2 the chain carries N-acetylalanine. Residues C21 and C22 each contribute to the selenite site.

The protein belongs to the selenium-binding protein family. Interacts with GRXS14 and GRXS16. Interacts with DALL3. In terms of tissue distribution, expressed in seedlings, roots, leaves, stems and flowers.

Its function is as follows. Binds cadmium and mediates lower sensitivity to stress requiring glutathione (GSH) for tolerance (e.g. cadmium, selenate, and hydrogen peroxide excess). Probably helps to detoxify cadmium potentially through direct binding. Binds selenium, cadmium, zinc and nickel in vitro. This Arabidopsis thaliana (Mouse-ear cress) protein is Selenium-binding protein 1.